The following is a 90-amino-acid chain: Putative UPF0401 protein YpjI (90 aa).

The protein belongs to the UPF0401 family.

The sequence is that of Putative UPF0401 protein YpjI (ypjI) from Escherichia coli (strain K12).